The primary structure comprises 118 residues: Holo-[acyl-carrier-protein] synthase (118 aa).

Positions 8 and 58 each coordinate Mg(2+).

Belongs to the P-Pant transferase superfamily. AcpS family. Mg(2+) is required as a cofactor.

It is found in the cytoplasm. It catalyses the reaction apo-[ACP] + CoA = holo-[ACP] + adenosine 3',5'-bisphosphate + H(+). Functionally, transfers the 4'-phosphopantetheine moiety from coenzyme A to a Ser of acyl-carrier-protein. The sequence is that of Holo-[acyl-carrier-protein] synthase from Streptococcus equi subsp. zooepidemicus (strain H70).